A 610-amino-acid chain; its full sequence is Elongation factor 4 (610 aa).

The tr-type G domain occupies 11 to 193 (EKIRNFSIIA…QIVEKVPAPT (183 aa)). Residues 23–28 (DHGKST) and 140–143 (NKID) contribute to the GTP site.

This sequence belongs to the TRAFAC class translation factor GTPase superfamily. Classic translation factor GTPase family. LepA subfamily.

Its subcellular location is the cell membrane. It catalyses the reaction GTP + H2O = GDP + phosphate + H(+). Functionally, required for accurate and efficient protein synthesis under certain stress conditions. May act as a fidelity factor of the translation reaction, by catalyzing a one-codon backward translocation of tRNAs on improperly translocated ribosomes. Back-translocation proceeds from a post-translocation (POST) complex to a pre-translocation (PRE) complex, thus giving elongation factor G a second chance to translocate the tRNAs correctly. Binds to ribosomes in a GTP-dependent manner. The chain is Elongation factor 4 from Streptococcus pyogenes serotype M3 (strain ATCC BAA-595 / MGAS315).